A 690-amino-acid polypeptide reads, in one-letter code: Calpain-9 (690 aa).

The segment at Met1–His23 is disordered. In terms of domain architecture, Calpain catalytic spans Leu42 to Thr337. Residues Leu81, Gly83, and Asp88 each coordinate Ca(2+). Cys97 is an active-site residue. Glu167 lines the Ca(2+) pocket. Residues His254 and Asn278 contribute to the active site. Ca(2+)-binding residues include Glu284, Asp291, Leu312, Asp314, and Glu316. The domain III stretch occupies residues Pro338–Gln521. EF-hand domains lie at Glu518–Lys552, Leu561–Phe589, and Asp591–Gln626. Residues Gln522–Ile690 are domain IV. Asp574, Ser576, Asn578, Lys580, Glu585, Asp604, Asp606, Ser608, Thr610, and Glu615 together coordinate Ca(2+).

This sequence belongs to the peptidase C2 family. Predominantly expressed in stomach and small intestine, although low levels of expression in other organs.

The protein resides in the cytoplasm. Its function is as follows. Calcium-regulated non-lysosomal thiol-protease. The chain is Calpain-9 (Capn9) from Mus musculus (Mouse).